A 321-amino-acid polypeptide reads, in one-letter code: Acetylglutamate kinase (321 aa).

Substrate is bound by residues 88-89 (GG), R110, and N216.

Belongs to the acetylglutamate kinase family. ArgB subfamily.

The protein localises to the cytoplasm. It catalyses the reaction N-acetyl-L-glutamate + ATP = N-acetyl-L-glutamyl 5-phosphate + ADP. It functions in the pathway amino-acid biosynthesis; L-arginine biosynthesis; N(2)-acetyl-L-ornithine from L-glutamate: step 2/4. Catalyzes the ATP-dependent phosphorylation of N-acetyl-L-glutamate. The protein is Acetylglutamate kinase of Ehrlichia chaffeensis (strain ATCC CRL-10679 / Arkansas).